We begin with the raw amino-acid sequence, 115 residues long: Large ribosomal subunit protein bL19 (115 aa).

Belongs to the bacterial ribosomal protein bL19 family.

This protein is located at the 30S-50S ribosomal subunit interface and may play a role in the structure and function of the aminoacyl-tRNA binding site. The chain is Large ribosomal subunit protein bL19 from Lawsonia intracellularis (strain PHE/MN1-00).